A 214-amino-acid chain; its full sequence is Charged multivesicular body protein 2b-A (214 aa).

Positions Gln-25–Lys-55 form a coiled coil. The tract at residues Met-178–Asp-214 is disordered. An MIT-interacting motif motif is present at residues Glu-202 to Gly-212.

Belongs to the SNF7 family. In terms of assembly, probable core component of the endosomal sorting required for transport complex III (ESCRT-III). ESCRT-III components are thought to multimerize to form a flat lattice on the perimeter membrane of the endosome.

It localises to the cytoplasm. The protein localises to the cytosol. Its subcellular location is the late endosome membrane. Probable core component of the endosomal sorting required for transport complex III (ESCRT-III) which is involved in multivesicular bodies (MVBs) formation and sorting of endosomal cargo proteins into MVBs. MVBs contain intraluminal vesicles (ILVs) that are generated by invagination and scission from the limiting membrane of the endosome and mostly are delivered to lysosomes enabling degradation of membrane proteins, such as stimulated growth factor receptors, lysosomal enzymes and lipids. The protein is Charged multivesicular body protein 2b-A (chmp2b-a) of Xenopus laevis (African clawed frog).